The chain runs to 332 residues: Probable allantoicase (332 aa).

It belongs to the allantoicase family.

It catalyses the reaction allantoate + H2O = (S)-ureidoglycolate + urea. The protein operates within nitrogen metabolism; (S)-allantoin degradation; (S)-ureidoglycolate from allantoate (aminidohydrolase route): step 1/1. The chain is Probable allantoicase from Pseudomonas paraeruginosa (strain DSM 24068 / PA7) (Pseudomonas aeruginosa (strain PA7)).